The primary structure comprises 180 residues: NEDD8-conjugating enzyme ubc-12 (180 aa).

In terms of domain architecture, UBC core spans 24-180; that stretch reads VRDKLLAQEL…RVREYISRYC (157 aa). C112 (glycyl thioester intermediate) is an active-site residue.

It belongs to the ubiquitin-conjugating enzyme family. UBC12 subfamily.

It localises to the cytoplasm. It catalyses the reaction [E1 NEDD8-activating enzyme]-S-[NEDD8 protein]-yl-L-cysteine + [E2 NEDD8-conjugating enzyme]-L-cysteine = [E1 NEDD8-activating enzyme]-L-cysteine + [E2 NEDD8-conjugating enzyme]-S-[NEDD8-protein]-yl-L-cysteine.. It functions in the pathway protein modification; protein neddylation. Its function is as follows. Accepts the ubiquitin-like protein NEDD8 from the uba-3-ula-1 E1 complex and catalyzes its covalent attachment to other proteins. Plays a role in male tail tip morphogenesis. This chain is NEDD8-conjugating enzyme ubc-12, found in Caenorhabditis elegans.